A 578-amino-acid polypeptide reads, in one-letter code: GPI-anchor transamidase component PIGT (578 aa).

The N-terminal stretch at 1-21 is a signal peptide; it reads MAAAMPLALLVLLLLGPGGWC. Residues 22–525 are Lumenal-facing; the sequence is LAEPPRDSLR…NLPTPDFSMP (504 aa). Asn-164 is a glycosylation site (N-linked (GlcNAc...) asparagine). Cystine bridges form between Cys-195-Cys-272 and Cys-226-Cys-231. Residues Asn-291 and Asn-327 are each glycosylated (N-linked (GlcNAc...) asparagine). Residues Asn-461, Asp-521, Ser-523, and Asn-527 each coordinate a 2-acyl-6-[6-phosphoethanolamine-alpha-D-mannosyl-(1-&gt;2)-6-phosphoethanolamine-alpha-D-mannosyl-(1-&gt;6)-2-phosphoethanolamine-alpha-D-mannosyl-(1-&gt;4)-alpha-D-glucosaminyl]-1-(1-radyl,2-acyl-sn-glycero-3-phospho)-1D-myo-inositol. Residues 526–548 traverse the membrane as a helical segment; sequence YNVICLTCTVVAVCYGSFYNLLT. At 549-578 the chain is on the cytoplasmic side; that stretch reads RTFHIEEPRTGGLAKRLANLIRRARGVPPL.

The protein belongs to the PIGT family. Heteropentamer. Part of the GPI-anchor transamidase complex, consisting of PIGK, PIGT, PIGS, PIGU and GAA1. Post-translationally, the disulfide bond between PIGK/GPI8 and PIGT is important for normal enzyme activity.

The protein localises to the endoplasmic reticulum membrane. It participates in glycolipid biosynthesis; glycosylphosphatidylinositol-anchor biosynthesis. Functionally, component of the glycosylphosphatidylinositol-anchor (GPI-anchor) transamidase (GPI-T) complex that catalyzes the formation of the linkage between a proprotein and a GPI-anchor and participates in GPI anchored protein biosynthesis. May play a crucial role in GPI-T complex assembly in the luminal layer. Binds GPI-anchor. This chain is GPI-anchor transamidase component PIGT, found in Homo sapiens (Human).